Consider the following 572-residue polypeptide: MSFKMDREEYAQHYGPTVGDSVRLGDTNLFAAIEKDFTVYGQESKFGGGKVLRDGMGVSATETRDNPSVVDTIITGATIIDYTGIIKADIGIRDGKIVAIGRGGNPDTMDNVDFVVGASTEAIAAEGLIVTAGGIDLHVHYISADLPEFGLDNGITTLFGGGTGPADGSNATTCTPGKFHITRMLQAVDDMPANFGFLAKGVGSETEVVEEQIKAGAAGIKTHEDWGATYAGIDNSLKVADKYDVSFAVHTDSLNEGGFMENTLESFQGRTVHTFHTEGSGGGHAPDIMVFAGKENILPSSTNPTNPYTTNAIGELLDMVMVCHHLDPKIPEDVSFAESRVRKQTVAAEDVLHDMGALSIMTSDAMAMGRVGEVAMRCWQLADKMKAQRGPLEGDSEFNDNNRIKRYVAKYTINPAITNGIADYIGSVEVGKFADLVIWEPAQFGAKPKLVLKGGMLTYGVMGDAGSSLPTPQPRIMRKLYGAYGQAVHETNLTFVSQYAYDHGIKEEIGLNKIVLPVKNTRNLTKRDMKLNDYAPKTIRIDPQTFDVFIDDELVTCEPIHTTSLSQRYFLF.

In terms of domain architecture, Urease spans 133 to 572 (GGIDLHVHYI…TSLSQRYFLF (440 aa)). Positions 138, 140, and 221 each coordinate Ni(2+). At K221 the chain carries N6-carboxylysine. H223 provides a ligand contact to substrate. H250 and H276 together coordinate Ni(2+). The Proton donor role is filled by H324. D364 lines the Ni(2+) pocket.

Belongs to the metallo-dependent hydrolases superfamily. Urease alpha subunit family. As to quaternary structure, heterotrimer of UreA (gamma), UreB (beta) and UreC (alpha) subunits. Three heterotrimers associate to form the active enzyme. Ni cation serves as cofactor. Post-translationally, carboxylation allows a single lysine to coordinate two nickel ions.

Its subcellular location is the cytoplasm. The enzyme catalyses urea + 2 H2O + H(+) = hydrogencarbonate + 2 NH4(+). The protein operates within nitrogen metabolism; urea degradation; CO(2) and NH(3) from urea (urease route): step 1/1. Ureolysis may allow urea to be employed as a nitrogen source for growth and produces ammonia which may protect from killing at low pH. The protein is Urease subunit alpha of Streptococcus salivarius (strain 57.I).